The primary structure comprises 452 residues: Transcription factor AP-2-delta (452 aa).

The residue at position 239 (Ser-239) is a Phosphoserine; by PKA. Positions 280-410 (RRKAANVTLL…VLSEMLNYLE (131 aa)) are H-S-H (helix-span-helix), dimerization. Residues 416 to 452 (KNGGAADSGQGHANSEKAPLRKTSEAAVKEGKTEKTD) form a disordered region. Residues 429–452 (NSEKAPLRKTSEAAVKEGKTEKTD) are compositionally biased toward basic and acidic residues.

This sequence belongs to the AP-2 family. In terms of assembly, binds DNA as a dimer. Can form homodimers or heterodimers with other AP-2 family members. Highly expressed in brain, placenta, skeletal muscle, thymus, small intestine, and prostate, and expressed at lower levels in leukocyte, spleen, testis, ovary and colon. Barely detectable in heart, kidney, liver, lung or pancreas.

The protein resides in the nucleus. Functionally, sequence-specific DNA-binding protein that interacts with inducible viral and cellular enhancer elements to regulate transcription of selected genes. AP-2 factors bind to the consensus sequence 5'-GCCNNNGGC-3' and activate genes involved in a large spectrum of important biological functions including proper eye, face, body wall, limb and neural tube development. They also suppress a number of genes including MCAM/MUC18, C/EBP alpha and MYC. This chain is Transcription factor AP-2-delta, found in Homo sapiens (Human).